A 557-amino-acid polypeptide reads, in one-letter code: Putative glutathione-regulated potassium-efflux system protein KefB (557 aa).

Transmembrane regions (helical) follow at residues 2 to 22, 24 to 44, 56 to 76, 84 to 104, 121 to 141, 146 to 166, 176 to 196, 199 to 219, 237 to 257, and 260 to 280; these read LGYL…ISDV, EILH…GLEL, IFGV…GLLM, AAVV…LQLM, VLLF…LLAG, HFDW…LIGG, FIAA…LVLG, LFMD…GVLL, GLLL…GVLY, and LLWV…VLYL. The 120-residue stretch at 356–475 folds into the RCK N-terminal domain; it reads KPQVIVVGFG…AGVTQFSRET (120 aa).

This sequence belongs to the monovalent cation:proton antiporter 2 (CPA2) transporter (TC 2.A.37) family. KefB subfamily. As to quaternary structure, interacts with the regulatory subunit KefG.

The protein localises to the cell inner membrane. Functionally, pore-forming subunit of a potassium efflux system that confers protection against electrophiles. Catalyzes K(+)/H(+) antiport. The sequence is that of Putative glutathione-regulated potassium-efflux system protein KefB from Shigella flexneri.